A 397-amino-acid polypeptide reads, in one-letter code: MCSIGEDDFGDEGATHAMLPGSSATGTVLSAGSCSKCNLASDELYKLNFRAAECQLCFLSYARHKFRAALGAAKALPRSAEVLLLVDGSGASLVLLDMLHFAQTQNTFKRLHCNARVLYIDACGNDSLSSLHKLHERYAPFEFYVIQLNAEPKSLQSLKEYSASIVNATQQELRSLTARQDYGLQQRKRLIGAVAAHLQCSHVFESSISSTLATQLLTSVALGRGGSVALDVALLDDRLQDDIKLLRPLKDLNEQEVQFYVHAQQLQPFTSENELDQSSAASLQNLTSAFVANLQINYASTVSTIFRTGDKIAAKQQTNVDPTTTCTLCHSVLDHQLSDTLLAIEYSRAVSEMGVALQQHDNMEALEQRARQRLTAAQDLCHACRNIQAELTSGNIP.

This sequence belongs to the CTU2/NCS2 family.

Its subcellular location is the cytoplasm. It functions in the pathway tRNA modification; 5-methoxycarbonylmethyl-2-thiouridine-tRNA biosynthesis. In terms of biological role, plays a central role in 2-thiolation of mcm(5)S(2)U at tRNA wobble positions of tRNA(Lys), tRNA(Glu) and tRNA(Gln). May act by forming a heterodimer with NCS6/CTU1 that ligates sulfur from thiocarboxylated URM1 onto the uridine of tRNAs at wobble position. This chain is Cytoplasmic tRNA 2-thiolation protein 2, found in Drosophila grimshawi (Hawaiian fruit fly).